Reading from the N-terminus, the 636-residue chain is Probable cyclin-dependent serine/threonine-protein kinase DDB_G0278487 (636 aa).

The disordered stretch occupies residues 1–41 (MPSQSNNVITSSTASSSMSSSSNSSDASSTSSSNTNNAHSS). A Protein kinase domain is found at 64-343 (YEIISKIGEG…AEQALQSPFF (280 aa)). ATP contacts are provided by residues 70-78 (IGEGISGSV) and Lys93. The Proton acceptor role is filled by Asp184. Disordered stretches follow at residues 378-408 (EQQK…QKKQ), 473-506 (KRQQ…NNSY), 527-555 (SETE…DEED), and 579-636 (NNQQ…LTIH). Over residues 473 to 485 (KRQQQEHEQRLQR) the composition is skewed to basic and acidic residues. Over residues 486-499 (EQQQQLNQLQQQKE) the composition is skewed to low complexity. Residues 529–555 (TESEYESDEEDFYTEEEVEDYSSDEED) are compositionally biased toward acidic residues. Composition is skewed to low complexity over residues 579-594 (NNQQ…QQQQ) and 617-628 (NNNNGNNNNNNN).

The protein belongs to the protein kinase superfamily. CMGC Ser/Thr protein kinase family. CDC2/CDKX subfamily.

It catalyses the reaction L-seryl-[protein] + ATP = O-phospho-L-seryl-[protein] + ADP + H(+). It carries out the reaction L-threonyl-[protein] + ATP = O-phospho-L-threonyl-[protein] + ADP + H(+). The polypeptide is Probable cyclin-dependent serine/threonine-protein kinase DDB_G0278487 (Dictyostelium discoideum (Social amoeba)).